A 559-amino-acid chain; its full sequence is Small ribosomal subunit protein bS1 (559 aa).

S1 motif domains lie at 21–87, 105–171, 192–260, 277–347, 364–434, and 451–520; these read GAII…LSRE, DEVV…VSRR, GQQV…LGLK, GTRV…LGIK, GDRI…LGIK, and GSIV…LSVK.

This sequence belongs to the bacterial ribosomal protein bS1 family.

Functionally, binds mRNA; thus facilitating recognition of the initiation point. It is needed to translate mRNA with a short Shine-Dalgarno (SD) purine-rich sequence. The chain is Small ribosomal subunit protein bS1 (rpsA) from Pseudomonas aeruginosa (strain ATCC 15692 / DSM 22644 / CIP 104116 / JCM 14847 / LMG 12228 / 1C / PRS 101 / PAO1).